A 387-amino-acid polypeptide reads, in one-letter code: Patatin-02 (387 aa).

The N-terminal stretch at 1–23 (MATTKSFLILIVMILATTSSTFA) is a signal peptide. Residues 32-230 (LSIDGGGIKG…TVADPALLSV (199 aa)) form the PNPLA domain. A GXGXXG motif is present at residues 36–41 (GGGIKG). The GXSXG signature appears at 75–79 (GTSTG). Ser77 functions as the Nucleophile in the catalytic mechanism. Asn115 carries an N-linked (GlcNAc...) asparagine glycan. Residue Asp216 is the Proton acceptor of the active site. Residues 216–218 (DGA) carry the DGA/G motif. Residues 361-385 (ETYEEALKRFAKLLSDRKKLRANKA) are a coiled coil.

This sequence belongs to the patatin family. As to expression, tuber and stolon.

It is found in the vacuole. Probable lipolytic acyl hydrolase (LAH), an activity which is thought to be involved in the response of tubers to pathogens. The polypeptide is Patatin-02 (Solanum tuberosum (Potato)).